The chain runs to 818 residues: ATM interactor (818 aa).

The span at 1 to 34 (MAATEAAAADSAGPAPGVPATPASTRGAAAASSP) shows a compositional bias: low complexity. The tract at residues 1-62 (MAATEAAAAD…RAAAPVPPAR (62 aa)) is disordered. The segment at 80–105 (ILCTVRGCGKILPNSPALNMHLVKSH) adopts a C2H2-type 1 zinc-finger fold. The C2H2-type 2; degenerate zinc-finger motif lies at 161 to 181 (HKCSKCSNSYGTEWDLKRHEE). A compositionally biased stretch (basic and acidic residues) spans 210 to 221 (HEIPAEHRDPPS). Disordered stretches follow at residues 210 to 284 (HEIP…ATPP) and 603 to 625 (DNRSLLSDTNPGPDAQLPAGSAQ). Residues 219–437 (PPSKKRKMES…PDSSVSSCSQ (219 aa)) form a required for formation of RAD51 foci region. Composition is skewed to polar residues over residues 229–243 (YLQNQKLSSKTTEPL) and 603–612 (DNRSLLSDTN).

Interacts via its C-terminus with ATM. Interacts with DYNLL; this interaction inhibits ATMIN transcriptional activity and hence may play a role in a feedback loop whereby DYNLL1 inhibits transactivation of its own promoter by ATMIN. ATMIN.

Its subcellular location is the nucleus. Its function is as follows. Transcription factor. Plays a crucial role in cell survival and RAD51 foci formation in response to methylating DNA damage. Involved in regulating the activity of ATM in the absence of DNA damage. May play a role in stabilizing ATM. Binds to the DYNLL1 promoter and activates its transcription. The chain is ATM interactor from Mus musculus (Mouse).